Here is a 134-residue protein sequence, read N- to C-terminus: Aspartate 1-decarboxylase (134 aa).

Ser25 serves as the catalytic Schiff-base intermediate with substrate; via pyruvic acid. Ser25 carries the post-translational modification Pyruvic acid (Ser). Thr57 contributes to the substrate binding site. Tyr58 acts as the Proton donor in catalysis. 73–75 contacts substrate; the sequence is GAA.

The protein belongs to the PanD family. Heterooctamer of four alpha and four beta subunits. Pyruvate is required as a cofactor. In terms of processing, is synthesized initially as an inactive proenzyme, which is activated by self-cleavage at a specific serine bond to produce a beta-subunit with a hydroxyl group at its C-terminus and an alpha-subunit with a pyruvoyl group at its N-terminus.

It is found in the cytoplasm. The catalysed reaction is L-aspartate + H(+) = beta-alanine + CO2. It functions in the pathway cofactor biosynthesis; (R)-pantothenate biosynthesis; beta-alanine from L-aspartate: step 1/1. Functionally, catalyzes the pyruvoyl-dependent decarboxylation of aspartate to produce beta-alanine. This chain is Aspartate 1-decarboxylase, found in Sulfurihydrogenibium sp. (strain YO3AOP1).